A 472-amino-acid chain; its full sequence is Mixed lineage kinase domain-like protein (472 aa).

The N-terminal bundle and brace (NBB); mediates INSP6 binding stretch occupies residues Met-1 to Asp-143. Residues Leu-61–Lys-81 are a coiled coil. Position 124 is a phosphoserine (Ser-124). A coiled-coil region spans residues Gln-138–Val-229. Residues Gly-192–Arg-456 enclose the Protein kinase domain. ATP contacts are provided by residues Leu-198–Ile-206 and Lys-219. Residues Ser-345 and Ser-347 each carry the phosphoserine; by RIPK3 modification. Thr-349 is subject to Phosphothreonine; by RIPK3. Ser-352 carries the post-translational modification Phosphoserine; by RIPK3.

Belongs to the protein kinase superfamily. Homooligomer. Homotrimer; forms homotrimers on necroptosis induction. Upon TNF-induced necrosis, forms in complex with PGAM5, RIPK1 and RIPK3. Within this complex, may play a role in the proper targeting of RIPK1-RIPK3 to its downstream effector PGAM5. Interacts with RIPK3; the interaction is direct and promotes its phosphorylation and subsequent activation. In terms of processing, phosphorylation by RIPK3 induces a conformational switch that is required for necroptosis. It also induces homotrimerization and localization to the plasma membrane. As to expression, highly expressed in thymus, colon, intestine, liver, spleen and lung. Expressed at much lower level in skeletal muscle, heart and kidney. Not detected in brain.

Its subcellular location is the cytoplasm. It is found in the cell membrane. The protein resides in the nucleus. Its activity is regulated as follows. Activated via binding to highly phosphorylated inositol phosphates such as inositolhexakisphosphate (InsP6) which mediates the release of an N-terminal auto-inhibitory region. Activation requires not only RIPK3-dependent phosphorylation but also binding to highly phosphorylated inositol phosphates. Functionally, pseudokinase that plays a key role in TNF-induced necroptosis, a programmed cell death process. Does not have protein kinase activity. Activated following phosphorylation by RIPK3, leading to homotrimerization, localization to the plasma membrane and execution of programmed necrosis characterized by calcium influx and plasma membrane damage. In addition to TNF-induced necroptosis, necroptosis can also take place in the nucleus in response to orthomyxoviruses infection: following ZBP1 activation, which senses double-stranded Z-RNA structures, nuclear RIPK3 catalyzes phosphorylation and activation of MLKL, promoting disruption of the nuclear envelope and leakage of cellular DNA into the cytosol. Binds to highly phosphorylated inositol phosphates such as inositolhexakisphosphate (InsP6) which is essential for its necroptotic function. This chain is Mixed lineage kinase domain-like protein, found in Mus musculus (Mouse).